A 60-amino-acid polypeptide reads, in one-letter code: Large ribosomal subunit protein bL32 (60 aa).

Positions 1–28 (MAVQQNKKSRSARDMRRSHDALEASTLS) are disordered. The span at 11 to 22 (SARDMRRSHDAL) shows a compositional bias: basic and acidic residues.

This sequence belongs to the bacterial ribosomal protein bL32 family.

This chain is Large ribosomal subunit protein bL32, found in Pseudomonas savastanoi pv. phaseolicola (strain 1448A / Race 6) (Pseudomonas syringae pv. phaseolicola (strain 1448A / Race 6)).